Reading from the N-terminus, the 109-residue chain is MDSFGRAPPLWPQSALPRVPGAAPSSSGLPWSRVGEIAIFTFVAVLALYLLWSWVGRDLLLVLKARRGGTTEELTFGPRERHSLPAVAVARVENPPCPSGSVEARPFTG.

Residues 1 to 28 (MDSFGRAPPLWPQSALPRVPGAAPSSSG) form a disordered region. A helical transmembrane segment spans residues 34–54 (VGEIAIFTFVAVLALYLLWSW).

The protein belongs to the mastrevirus movement protein family. In terms of assembly, interacts with the capsid protein (CP). Part of a MP-CP-viral DNA complex.

Its subcellular location is the host membrane. In terms of biological role, involved in the viral transport within, and between cells. This is Movement protein from Sugarcane streak virus (isolate South Africa) (SSV).